The sequence spans 379 residues: UDP-4-amino-4-deoxy-L-arabinose--oxoglutarate aminotransferase (379 aa).

The residue at position 182 (lysine 182) is an N6-(pyridoxal phosphate)lysine.

It belongs to the DegT/DnrJ/EryC1 family. ArnB subfamily. As to quaternary structure, homodimer. Requires pyridoxal 5'-phosphate as cofactor.

The enzyme catalyses UDP-4-amino-4-deoxy-beta-L-arabinose + 2-oxoglutarate = UDP-beta-L-threo-pentopyranos-4-ulose + L-glutamate. It functions in the pathway nucleotide-sugar biosynthesis; UDP-4-deoxy-4-formamido-beta-L-arabinose biosynthesis; UDP-4-deoxy-4-formamido-beta-L-arabinose from UDP-alpha-D-glucuronate: step 2/3. Its pathway is bacterial outer membrane biogenesis; lipopolysaccharide biosynthesis. Its function is as follows. Catalyzes the conversion of UDP-4-keto-arabinose (UDP-Ara4O) to UDP-4-amino-4-deoxy-L-arabinose (UDP-L-Ara4N). The modified arabinose is attached to lipid A and is required for resistance to polymyxin and cationic antimicrobial peptides. The sequence is that of UDP-4-amino-4-deoxy-L-arabinose--oxoglutarate aminotransferase from Salmonella choleraesuis (strain SC-B67).